Reading from the N-terminus, the 447-residue chain is MNPNQKIITIGSICMGIGIISLILQIGNIISMWVSHSIQTENQNHHEACNPSIAGQDAASVALAGNSSLCPISGWAIYSKDNGIRIGSKGDVFVIREPFISCSHLECRTFFLTQGALLNDKHSNGTVKDRSPYRTLMSCPVGEAPSPYNSRFVSVAWSASACHDGMGWLTIGISGPDNGAVAVLKYNGIITDTIKSWKNNILRTQESECACINGSCFTIMTDGPSNGQASYKIFKIEKGKVVKSSELNAPNYHYEECSCYPDAGEVMCVCRDNWHGSNRPWVSFNKNLDYQIGYICSGVFGDNPRPNDGTGSCGPVSSNGAYGIKGFSFKYGNGVWIGRTKSTSSRSGFEMIWDPNGWTETDSSFSVKQDIVAITDWSGYSGSFVQHPELTGLDCMRPCFWVELIRGRPNHNTIWTSGSSISFCGVNSDTVGWSWPDGAELPFTIDK.

The Intravirion portion of the chain corresponds to 1 to 6; the sequence is MNPNQK. A helical membrane pass occupies residues 7–27; that stretch reads IITIGSICMGIGIISLILQIG. The segment at 11 to 33 is involved in apical transport and lipid raft association; sequence GSICMGIGIISLILQIGNIISMW. Residues 28-447 lie on the Virion surface side of the membrane; it reads NIISMWVSHS…GAELPFTIDK (420 aa). The segment at 36–68 is hypervariable stalk region; the sequence is HSIQTENQNHHEACNPSIAGQDAASVALAGNSS. An N-linked (GlcNAc...) asparagine; by host glycan is attached at Asn66. The head of neuraminidase stretch occupies residues 69–447; that stretch reads LCPISGWAIY…GAELPFTIDK (379 aa). Disulfide bonds link Cys70-Cys395, Cys102-Cys107, Cys162-Cys209, Cys211-Cys216, Cys257-Cys270, Cys259-Cys268, Cys296-Cys313, and Cys399-Cys424. Arg96 serves as a coordination point for substrate. N-linked (GlcNAc...) asparagine; by host glycosylation occurs at Asn124. The active-site Proton donor/acceptor is Asp129. Arg130 lines the substrate pocket. Asn213 carries N-linked (GlcNAc...) asparagine; by host glycosylation. 255–256 is a substrate binding site; the sequence is EE. Substrate is bound at residue Arg271. Ca(2+) contacts are provided by Asp272, Gly276, and Asp302. Arg346 is a binding site for substrate. Tyr380 serves as the catalytic Nucleophile.

The protein belongs to the glycosyl hydrolase 34 family. In terms of assembly, homotetramer. Ca(2+) serves as cofactor. Post-translationally, N-glycosylated.

The protein localises to the virion membrane. The protein resides in the host apical cell membrane. The catalysed reaction is Hydrolysis of alpha-(2-&gt;3)-, alpha-(2-&gt;6)-, alpha-(2-&gt;8)- glycosidic linkages of terminal sialic acid residues in oligosaccharides, glycoproteins, glycolipids, colominic acid and synthetic substrates.. With respect to regulation, inhibited by the neuraminidase inhibitors zanamivir (Relenza) and oseltamivir (Tamiflu). These drugs interfere with the release of progeny virus from infected cells and are effective against all influenza strains. Resistance to neuraminidase inhibitors is quite rare. Catalyzes the removal of terminal sialic acid residues from viral and cellular glycoconjugates. Cleaves off the terminal sialic acids on the glycosylated HA during virus budding to facilitate virus release. Additionally helps virus spread through the circulation by further removing sialic acids from the cell surface. These cleavages prevent self-aggregation and ensure the efficient spread of the progeny virus from cell to cell. Otherwise, infection would be limited to one round of replication. Described as a receptor-destroying enzyme because it cleaves a terminal sialic acid from the cellular receptors. May facilitate viral invasion of the upper airways by cleaving the sialic acid moieties on the mucin of the airway epithelial cells. Likely to plays a role in the budding process through its association with lipid rafts during intracellular transport. May additionally display a raft-association independent effect on budding. Plays a role in the determination of host range restriction on replication and virulence. Sialidase activity in late endosome/lysosome traffic seems to enhance virus replication. The sequence is that of Neuraminidase from Aves.